Here is a 435-residue protein sequence, read N- to C-terminus: tRNA(Ile)-lysidine synthase (435 aa).

24 to 29 (SGGLDS) lines the ATP pocket.

The protein belongs to the tRNA(Ile)-lysidine synthase family.

Its subcellular location is the cytoplasm. It catalyses the reaction cytidine(34) in tRNA(Ile2) + L-lysine + ATP = lysidine(34) in tRNA(Ile2) + AMP + diphosphate + H(+). Functionally, ligates lysine onto the cytidine present at position 34 of the AUA codon-specific tRNA(Ile) that contains the anticodon CAU, in an ATP-dependent manner. Cytidine is converted to lysidine, thus changing the amino acid specificity of the tRNA from methionine to isoleucine. In Chromobacterium violaceum (strain ATCC 12472 / DSM 30191 / JCM 1249 / CCUG 213 / NBRC 12614 / NCIMB 9131 / NCTC 9757 / MK), this protein is tRNA(Ile)-lysidine synthase.